Here is a 972-residue protein sequence, read N- to C-terminus: MDNLQVSDIETALQCISSTASQDDKNKALQFLEQFQRSTVAWSICNEILSKEDPTNALLELNIFAAQTLRNKVTYDLSQLENNLPQFKDSLLTLLLSHNQKLIITQLNVALARLAIQFLEWQNPIFEIISLLNSSPSILLNFLRILPEETLDIASTSLTEVEFNSRIHELIDPIAEDVLKFLVSCIDLLQNTDGNSSSSISLEQILRCLNSWSYEFPVEQLLTVQPLINLVFETISNGNESDMEAFDSAIDCLCVILRESRDTTNEQLISALFHQLMLLQEKLLPTLFTDHPLNDEYDDDLLEGMTRLFVEAGEAWSVVISKNPDFFKPMVLVLLMLTCKNEDLDVVSYTFPFWFNFKQSLVLPRYQESRKAYSDIFVKLINGIITHLQYPSGQFSSKEEEDKFKDFRYHMGDVLKDCTAVVGTSEALSQPLIRIKSAIENNNSWQIMEAPLFSLRTMAKEISLTENTILPEIIKIICNLPEQAKIRYASTLVLGRYTEWTAKHPELLEVQLQYIFNGFQLHEGSSDMQSIITASSHALMFFCSDCSKLLVGYIDQLINFFLNVQSSIDIESQFELCQGLSAVINNQPEAKVSVIFQKLVDDNLRQIEALIPQWKANPTLLAPQIADKIDLLYALFEELKPRYNYPQQGSEPLLPRIEFIWKALRTLLVDAGAMTDSIIVERVAKLLRRIFERFHVFCEPILPSVAEFLIQGYLTTGFGSYLWCSGSLIVIFGDDESFPISPSLKDAVWKFALSQCETFILNFNKFDKLQLNDYHEAIIDFFSLISDLIMFYPGAFLNSTELLGPVLNVALECVNKLDNYDAYICILRCLDDIISWGFKTPPISTVSIEIVPDEWRKQVINEVVIAHGNQLILVLFIGLVTTFENTAHSDAISCIVKCLRILTEANNNDATICIDWIYKVVEQLGQVTLNERDNLAKAVVEGLNSKDYRKVREGIRAFVGWYSRKNINSRFE.

It localises to the nucleus. Functionally, involved in mRNA transport from nucleus to cytoplasm. The chain is mRNA transport regulator MTR10 (MTR10) from Saccharomyces cerevisiae (strain ATCC 204508 / S288c) (Baker's yeast).